Reading from the N-terminus, the 108-residue chain is UPF0060 membrane protein YnfA (108 aa).

Topologically, residues 1-5 are periplasmic; sequence MIKTT. The helical transmembrane segment at 6-26 threads the bilayer; it reads LLFFATALCEIIGCFLPWLWL. At 27 to 30 the chain is on the cytoplasmic side; the sequence is KRNA. The helical transmembrane segment at 31-51 threads the bilayer; that stretch reads SIWLLLPAGISLALFVWLLTL. At 52–60 the chain is on the periplasmic side; the sequence is HPAASGRVY. A helical membrane pass occupies residues 61–81; the sequence is AAYGGVYVCTALIWLRVVDGV. Residues 82 to 84 lie on the Cytoplasmic side of the membrane; that stretch reads KLT. Residues 85-105 form a helical membrane-spanning segment; it reads LYDWTGALIALCGMLIIVAGW. Residues 106–108 lie on the Periplasmic side of the membrane; sequence GRT.

This sequence belongs to the UPF0060 family.

It is found in the cell inner membrane. The polypeptide is UPF0060 membrane protein YnfA (Escherichia coli O127:H6 (strain E2348/69 / EPEC)).